A 352-amino-acid chain; its full sequence is B1 bradykinin receptor (352 aa).

The Extracellular portion of the chain corresponds to 1–41 (MASWPPLQLQSSNQSQLFPQNATACDNAPEAWDLLHRVLPT). N-linked (GlcNAc...) asparagine glycans are attached at residues Asn-13 and Asn-21. A helical transmembrane segment spans residues 42 to 62 (FIISICSFGLLGNLFVLLVFL). The Cytoplasmic portion of the chain corresponds to 63–72 (LPRRRLNVAE). Residues 73–93 (IYLANLAASDLVFVLGLPFWA) form a helical membrane-spanning segment. Over 94-110 (ENIWNQFNWPFGALLCR) the chain is Extracellular. Cys-109 and Cys-188 are disulfide-bonded. The helical transmembrane segment at 111–131 (VINGIIKANLFISIFLVVAIS) threads the bilayer. Residues 132-153 (QDRYCVLVHPMASRRRQRRRQA) are Cytoplasmic-facing. The chain crosses the membrane as a helical span at residues 154 to 174 (RVTCVLIWVVGGLLSIPTFLL). The Extracellular segment spans residues 175-206 (RSIQAVPDLNITACILLLPHEAWHFARIVELN). An N-linked (GlcNAc...) asparagine glycan is attached at Asn-184. Residues 207 to 227 (ILAFLLPLAAIIFFNYHILAS) traverse the membrane as a helical segment. At 228 to 250 (LRGREEVSRTRCGGSKDSKTTAL) the chain is on the cytoplasmic side. Residues 251 to 271 (ILTLVVAFLVCWAPYHFFAFL) traverse the membrane as a helical segment. At 272–294 (EFLFQVQAVRGCFWEDFIDLGLQ) the chain is on the extracellular side. A helical membrane pass occupies residues 295–315 (LANFLAFTNSSLNPVIYVFAG). Residues 316-352 (RLFRTKVWELYKQCTPKSLAPISSSHRKEIFQLFWRN) lie on the Cytoplasmic side of the membrane. The S-palmitoyl cysteine moiety is linked to residue Cys-329.

This sequence belongs to the G-protein coupled receptor 1 family. Bradykinin receptor subfamily. BDKRB1 sub-subfamily.

The protein localises to the cell membrane. In terms of biological role, this is a receptor for bradykinin. Could be a factor in chronic pain and inflammation. This Macaca fascicularis (Crab-eating macaque) protein is B1 bradykinin receptor (BDKRB1).